Consider the following 677-residue polypeptide: MKYVNHKTIVAFLPEIGKAGSHVTSRPNLEARVDRDSHGATKLFLSSICRVMAAKETQAERGLISSCFNLALGWQLSNAMSDDTCANPLLLGWIKEWLDQARERNTKGVTVYKKAYESMKACPLTFQHPSEAQQLNGLGPKLCERLTNKLKEYCKEHGLPMPEDPRTAKADKRKSTDGDTEGQPAKKARKPKPYAPALRSGPFALILALSSLDENSNQSMTKAELIEKAQPYCDSSFTVPSDPTKFFTAWNSMKILLTKELVYTRGHPLKKYSLTEEGWEVAKAIKKTAQKSIQNTLPFDVQSDVTADEPRTAQREDLASQRDFERQIRPGLQAHNSQRHTLDSLENTLDNSTITPIPISPDNFTVQLILDTREVRTSKDRDYISNELIRKGITPEVRALEVGDTMWVAKFHDPTFLRKYGEEGDEIMLDWIVERKRLDDLIGSIKDGRFHEQKFRLRRSGIKNVIYLIEEFAVTHHESNAAAAQKYHDMVASAIAQTQVVNGYFVKRTKNLDDTIRYLARMTFLLRNMYSAPSPPSSRTSARPSHTLALLPTRHLALSSSHISALNTLRAENPHVTYGVTFPTFCAIASKSDALTLRDIFLKMLMCTKGVSGDKALEIQRVWPTPQAFIRAFEELTDPKQKENMVADRMAHVMVGRKKIAKVLSRKIAEVWGGLPG.

Residues 156–177 show a composition bias toward basic and acidic residues; it reads EHGLPMPEDPRTAKADKRKSTD. Residues 156–196 form a disordered region; sequence EHGLPMPEDPRTAKADKRKSTDGDTEGQPAKKARKPKPYAP. Positions 367-473 constitute an ERCC4 domain; that stretch reads QLILDTREVR…NVIYLIEEFA (107 aa).

It belongs to the XPF family. Interacts with eme1. It depends on Mg(2+) as a cofactor.

It localises to the nucleus. Functionally, interacts with eme1 to form a DNA structure-specific endonuclease with substrate preference for branched DNA structures with a 5'-end at the branch nick. Typical substrates include 3'-flap structures, D-loops, replication forks and nicked Holliday junctions. May be required in mitosis for the processing of stalled or collapsed replication fork intermediates. May be required in meiosis for the repair of meiosis-specific double strand breaks subsequent to single-end invasion (SEI). This chain is Crossover junction endonuclease mus81 (mus81), found in Emericella nidulans (strain FGSC A4 / ATCC 38163 / CBS 112.46 / NRRL 194 / M139) (Aspergillus nidulans).